A 438-amino-acid polypeptide reads, in one-letter code: Trigger factor (438 aa).

Residues 162-247 enclose the PPIase FKBP-type domain; the sequence is GDIVTIDFEG…VKDIKVKELP (86 aa).

The protein belongs to the FKBP-type PPIase family. Tig subfamily.

It is found in the cytoplasm. It catalyses the reaction [protein]-peptidylproline (omega=180) = [protein]-peptidylproline (omega=0). In terms of biological role, involved in protein export. Acts as a chaperone by maintaining the newly synthesized protein in an open conformation. Functions as a peptidyl-prolyl cis-trans isomerase. In Caldicellulosiruptor bescii (strain ATCC BAA-1888 / DSM 6725 / KCTC 15123 / Z-1320) (Anaerocellum thermophilum), this protein is Trigger factor.